The chain runs to 66 residues: KDGYLVGNDGCKYSCLTRPGHYCASECSRVKGKDGYCYAWMACYCYNMPNWVKTWSRATNKCGKRK.

The LCN-type CS-alpha/beta domain occupies 1–63 (KDGYLVGNDG…TWSRATNKCG (63 aa)). 4 disulfides stabilise this stretch: Cys11–Cys62, Cys15–Cys37, Cys23–Cys43, and Cys27–Cys45. The residue at position 62 (Cys62) is a Cysteine amide.

This sequence belongs to the long (4 C-C) scorpion toxin superfamily. Sodium channel inhibitor family. Beta subfamily. Expressed by the venom gland.

The protein resides in the secreted. Beta toxins bind voltage-independently at site-4 of sodium channels (Nav) and shift the voltage of activation toward more negative potentials thereby affecting sodium channel activation and promoting spontaneous and repetitive firing. This chain is Toxin Tppa2, found in Tityus pachyurus (Colombian scorpion).